A 604-amino-acid polypeptide reads, in one-letter code: MTVPPISERASFEVAKRLLCQILNEGLVSGTLETFESEEPYLCLFRNSCNTEKPEKCIRVRLQPSAQAGIFMRSARIVSLVRPEMLQMPVTLVDGTSERRELRSGALFQFASSLFTEHVEASTLEEIALGLENSEANTEKWLELHSSPGPLDLNSPSVLWERALIWGHPTHPFHRLCYAQEGLAPVEPRDLPEFLTPTLAFVSVLRDEISISGPFEESLQPLLAQLDVPAPETADRVVVPCLRLQLPCVFRHFPSAVLVKTVSGCADTQASMRTLTLRPELNFPYHIKLSIACQITSDVRAIRPCQTLGGQLVRKQLHEFFPPDLWWFKEVASVAGNQTAQGDTQENEDKARHIGCILREDLEARANANNEALIIAGSLAQQPANDPRTHAEIVFGLETVEQKHDWLKEYVAGFLRAVLPSLVQYGIGMEAHGQNALVRVCRDTRKITGFVVRDFEGIKVHVPTLEKLGINLCMTSPGCTKNLEDIWSKIHHSIFQNHLGNLVYALGLDRHDGWTIIRDELFAALKPDTDPRAKELYDFILQDTMPFKCFLRMRMSEHFNDYDGDEQDQPRVKRDERPLPNALLMGSARWEKVLNECAPKKLES.

The enzyme catalyses cyclo(L-arginyl-(Z)-dehydro-4-O-homoseryl-tyrosyl) + citrate + ATP = NK13650 B + AMP + diphosphate + H(+). It participates in secondary metabolite biosynthesis. Functionally, NRPS-independent siderophore synthetase-like protein; part of the ank cluster that mediates the biosynthesis of NK13650 C, a highly modified cyclo-arginine-tyrosine dipeptide. AnkE is responsible of the production of NK13650 B via ligation of citrate to the ankD product. Within the pathway, the cyclodipeptide synthase ankA acts as the scaffold-generating enzyme and is responsible for formation of the cyclo-Arg-Tyr diketopiperazine (cRY) from L-Arg and L-Tyr. The ankA product cRY is desaturated by the cytochrome P450 monooxygenase ankB to yield a dehydro-cyclodipeptide intermediate. The FAD-dependent monooxygenase ankC then installs the m-OH, ankD catalyzes the attachment of L-homoserine, and ankE ligates citrate to the ankD product to yield NK13650 B. The O-methyltransferase ankF is responsible for methylation of the C-17 phenol group of NK13650 B to produce NK13650 D. Amidation of NK13650 D with L-Asp by ankG then leads to the production of NK13650 C, whereas amidation of NK13650 B produces NK13650 A. This Aspergillus thermomutatus (Neosartorya pseudofischeri) protein is NRPS-independent siderophore synthetase-like protein ankE.